We begin with the raw amino-acid sequence, 271 residues long: 5-deoxy-glucuronate isomerase (271 aa).

This sequence belongs to the isomerase IolB family.

The enzyme catalyses 5-deoxy-D-glucuronate = 5-dehydro-2-deoxy-D-gluconate. It participates in polyol metabolism; myo-inositol degradation into acetyl-CoA; acetyl-CoA from myo-inositol: step 4/7. Involved in the isomerization of 5-deoxy-glucuronate (5DG) to 5-dehydro-2-deoxy-D-gluconate (DKG or 2-deoxy-5-keto-D-gluconate). In Shouchella clausii (strain KSM-K16) (Alkalihalobacillus clausii), this protein is 5-deoxy-glucuronate isomerase.